The primary structure comprises 395 residues: MAKAKFERTKPHCNIGTIGHVDHGKTTLTAAITAVLAARVAGNTATDFANIDKAPEERERGITISTAHVEYETEKRHYAHVDCPGHADYVKNMITGAAQMDGAILVVAATDGVMAQTKEHILLSRQVGVPYIIVFLNKCDMVDDPELIELVEMEVTEQLEEYGFNDCPIIQGSALKALEDPNGPWGDKIMELMDTVDSYIPDPQRDTDKPFLMPVEDVFTITGRGTVATGRVERGTLHLNDELEILGVKEDVQKTVVTGIEMFRKQLDEAQAGDNIGALLRGINRDQIVRGQVLAKPGTVTCHHKFTAQVYVLTKDEGGRHTPFFNNYRPQFYFRTTDVTGVCELPAGTEMCMPGDNVEMTIELIHPVAMEQGLTFAIREGGRTVGSGRVATVIE.

In terms of domain architecture, tr-type G spans 10-204; sequence KPHCNIGTIG…TVDSYIPDPQ (195 aa). The tract at residues 19–26 is G1; the sequence is GHVDHGKT. Residue 19 to 26 participates in GTP binding; that stretch reads GHVDHGKT. Position 26 (Thr26) interacts with Mg(2+). The tract at residues 61-65 is G2; the sequence is GITIS. The segment at 82 to 85 is G3; that stretch reads DCPG. GTP contacts are provided by residues 82–86 and 137–140; these read DCPGH and NKCD. Residues 137-140 form a G4 region; it reads NKCD. The interval 173–175 is G5; sequence SAL.

The protein belongs to the TRAFAC class translation factor GTPase superfamily. Classic translation factor GTPase family. EF-Tu/EF-1A subfamily. As to quaternary structure, monomer.

Its subcellular location is the cytoplasm. It catalyses the reaction GTP + H2O = GDP + phosphate + H(+). GTP hydrolase that promotes the GTP-dependent binding of aminoacyl-tRNA to the A-site of ribosomes during protein biosynthesis. The chain is Elongation factor Tu from Agathobacter rectalis (strain ATCC 33656 / DSM 3377 / JCM 17463 / KCTC 5835 / VPI 0990) (Eubacterium rectale).